The following is a 375-amino-acid chain: Phosphoglycerate kinase (375 aa).

Residues valine 1, aspartate 2, phenylalanine 3, asparagine 4, arginine 17, serine 40, histidine 41, glycine 43, arginine 44, leucine 99, arginine 100, histidine 147, and arginine 148 each contribute to the (2R)-3-phosphoglycerate site. An ADP-binding site is contributed by glycine 191. A CDP-binding site is contributed by glycine 191. Residues alanine 192 and lysine 193 each contribute to the AMP site. Alanine 192 is a binding site for ATP. Alanine 192 is a Mg(2+) binding site. Position 196 (aspartate 196) interacts with CDP. Aspartate 196 serves as a coordination point for Mg(2+). Lysine 197 is an AMP binding site. Lysine 197 lines the ATP pocket. An ADP-binding site is contributed by glycine 215. Residue glycine 215 coordinates CDP. Residues glycine 216 and glycine 290 each contribute to the AMP site. Glycine 216 and glycine 290 together coordinate ATP. Residues glycine 315 and phenylalanine 320 each coordinate CDP. Phenylalanine 320 is an ADP binding site. Residue glutamate 321 participates in AMP binding. ATP-binding residues include glutamate 321, aspartate 352, and threonine 353. Aspartate 352 contacts Mg(2+).

The protein belongs to the phosphoglycerate kinase family. In terms of assembly, monomer. It depends on Mg(2+) as a cofactor.

The catalysed reaction is (2R)-3-phosphoglycerate + ATP = (2R)-3-phospho-glyceroyl phosphate + ADP. It functions in the pathway carbohydrate degradation; glycolysis; pyruvate from D-glyceraldehyde 3-phosphate: step 2/5. This chain is Phosphoglycerate kinase (PGK), found in Tetrahymena pyriformis.